The chain runs to 141 residues: Nucleoside diphosphate kinase (141 aa).

ATP is bound by residues Lys-10, Phe-58, Arg-86, Thr-92, Arg-103, and Asn-113. The active-site Pros-phosphohistidine intermediate is the His-116.

This sequence belongs to the NDK family. In terms of assembly, homotetramer. Requires Mg(2+) as cofactor.

It localises to the cytoplasm. It catalyses the reaction a 2'-deoxyribonucleoside 5'-diphosphate + ATP = a 2'-deoxyribonucleoside 5'-triphosphate + ADP. It carries out the reaction a ribonucleoside 5'-diphosphate + ATP = a ribonucleoside 5'-triphosphate + ADP. Its function is as follows. Major role in the synthesis of nucleoside triphosphates other than ATP. The ATP gamma phosphate is transferred to the NDP beta phosphate via a ping-pong mechanism, using a phosphorylated active-site intermediate. The chain is Nucleoside diphosphate kinase from Hydrogenovibrio crunogenus (strain DSM 25203 / XCL-2) (Thiomicrospira crunogena).